The following is a 392-amino-acid chain: Pannexin-3 (392 aa).

The Cytoplasmic portion of the chain corresponds to 1 to 39 (MSLAHTAAEYMLSDALLPDRRGPRLKGLRLELPLDRIVK). Residues 40 to 60 (FVAVGSPLLLMSLAFAQEFSS) traverse the membrane as a helical segment. The Extracellular segment spans residues 61–113 (GSPISCFSPSNFSIRQAAYVDSSCWDSLLHHKQDGPGQDKMKSLWPHKALPYS). A glycan (N-linked (GlcNAc...) asparagine) is linked at N71. A helical membrane pass occupies residues 114–134 (LLALALLMYLPVLLWQYAAVP). Residues 135 to 215 (ALSSDLLFII…VATYLLRNSL (81 aa)) are Cytoplasmic-facing. A helical membrane pass occupies residues 216–236 (LLIFTSATYLYLGHFHLDVFF). Residues 237 to 267 (QEEFSCSIKTGLLSDETHVPNLITCRLTSLS) are Extracellular-facing. Residues 268–288 (IFQIVSLSSVAIYTILVPVII) form a helical membrane-spanning segment. The Cytoplasmic portion of the chain corresponds to 289-392 (YNLTRLCRWD…LTNSACDEHP (104 aa)).

The protein belongs to the pannexin family. Homoheptameric.

It localises to the cell membrane. It is found in the cell junction. The protein localises to the gap junction. The protein resides in the endoplasmic reticulum membrane. It catalyses the reaction Ca(2+)(in) = Ca(2+)(out). The catalysed reaction is ATP(in) = ATP(out). Regulator of osteoblast differentiation by functionning as a Ca(2+) channel in the endoplasmic reticulum which regulates calmodulin (CaM) pathways. Allows ATP release into the extracellular space and activation or purinergic receptors. The protein is Pannexin-3 of Homo sapiens (Human).